The following is a 282-amino-acid chain: Putative 4-diphosphocytidyl-2-C-methyl-D-erythritol kinase (282 aa).

K9 is an active-site residue. ATP is bound at residue 93–103 (PVSAGLAGGST). D135 is an active-site residue.

The protein belongs to the GHMP kinase family. IspE subfamily.

It carries out the reaction 4-CDP-2-C-methyl-D-erythritol + ATP = 4-CDP-2-C-methyl-D-erythritol 2-phosphate + ADP + H(+). Functionally, catalyzes the phosphorylation of the position 2 hydroxy group of 4-diphosphocytidyl-2C-methyl-D-erythritol. This chain is Putative 4-diphosphocytidyl-2-C-methyl-D-erythritol kinase, found in Staphylococcus saprophyticus subsp. saprophyticus (strain ATCC 15305 / DSM 20229 / NCIMB 8711 / NCTC 7292 / S-41).